The following is a 180-amino-acid chain: UPF0227 protein CKO_01948 (180 aa).

It belongs to the UPF0227 family.

In Citrobacter koseri (strain ATCC BAA-895 / CDC 4225-83 / SGSC4696), this protein is UPF0227 protein CKO_01948.